A 371-amino-acid polypeptide reads, in one-letter code: MSEMSLIMLAAGNSTRFNTKVKKQFLRLGNDPLWLYATKNLSSFYPFKKIVVTSSNITYMKKFTKNYEFIEGGDTRAESLKKALELIDSEFVMVSDVARVLVSKNLFDRLIENLDKADCITPALKVADTTLFDNEALQREKIKLIQTPQISKTKLLKKALDQNLEFTDDSTAIAAMGGKIWFVEGEENARKLTFKEDLKKLDLPTPSFEIFTGNGFDVHEFGENRPLLLAGVQIHPTMGLKAHSDGDVLAHSLTDAILGAAGLGDIGELYPDTDMKFKNANSMELLKQAYDKVREIGFELINIDICVMAQSPKLKDFKQAMQSNIAHTLDLDEFRINVKATTTEKLGFIGRKEGMAVLSSVNLKYFDWTRL.

The 2-C-methyl-D-erythritol 4-phosphate cytidylyltransferase stretch occupies residues 1–210 (MSEMSLIMLA…LDLPTPSFEI (210 aa)). Residues 211-371 (FTGNGFDVHE…NLKYFDWTRL (161 aa)) form a 2-C-methyl-D-erythritol 2,4-cyclodiphosphate synthase region. The a divalent metal cation site is built by Asp217 and His219. Residues 217–219 (DVH) and 243–244 (HS) contribute to the 4-CDP-2-C-methyl-D-erythritol 2-phosphate site. His251 serves as a coordination point for a divalent metal cation. Residues 265-267 (DIG), 270-274 (YPDTD), 309-315 (AQSPKLK), 341-344 (TTTE), Phe348, and Arg351 each bind 4-CDP-2-C-methyl-D-erythritol 2-phosphate.

It in the N-terminal section; belongs to the IspD/TarI cytidylyltransferase family. IspD subfamily. The protein in the C-terminal section; belongs to the IspF family. The cofactor is a divalent metal cation.

The enzyme catalyses 2-C-methyl-D-erythritol 4-phosphate + CTP + H(+) = 4-CDP-2-C-methyl-D-erythritol + diphosphate. It catalyses the reaction 4-CDP-2-C-methyl-D-erythritol 2-phosphate = 2-C-methyl-D-erythritol 2,4-cyclic diphosphate + CMP. It participates in isoprenoid biosynthesis; isopentenyl diphosphate biosynthesis via DXP pathway; isopentenyl diphosphate from 1-deoxy-D-xylulose 5-phosphate: step 2/6. It functions in the pathway isoprenoid biosynthesis; isopentenyl diphosphate biosynthesis via DXP pathway; isopentenyl diphosphate from 1-deoxy-D-xylulose 5-phosphate: step 4/6. Its function is as follows. Bifunctional enzyme that catalyzes the formation of 4-diphosphocytidyl-2-C-methyl-D-erythritol from CTP and 2-C-methyl-D-erythritol 4-phosphate (MEP) (IspD), and catalyzes the conversion of 4-diphosphocytidyl-2-C-methyl-D-erythritol 2-phosphate (CDP-ME2P) to 2-C-methyl-D-erythritol 2,4-cyclodiphosphate (ME-CPP) with a corresponding release of cytidine 5-monophosphate (CMP) (IspF). The polypeptide is Bifunctional enzyme IspD/IspF (Campylobacter jejuni subsp. jejuni serotype O:2 (strain ATCC 700819 / NCTC 11168)).